The following is a 1096-amino-acid chain: Eukaryotic translation initiation factor 3 subunit A (1096 aa).

Residues 323–502 (QATRVLLATL…GSIHFGAADA (180 aa)) form the PCI domain. Coiled coils occupy residues 591–643 (SERQ…IDRK), 677–761 (SVLR…RMQK), and 811–839 (KEGAEERMASAREVAEQTRRDEQEKERRA). The span at 808-852 (ELPKEGAEERMASAREVAEQTRRDEQEKERRAVRESQRPSKREIV) shows a compositional bias: basic and acidic residues. Positions 808–1096 (ELPKEGAEER…ADDDRNWRQK (289 aa)) are disordered. The span at 865 to 875 (AQPTQPRTISS) shows a compositional bias: polar residues. Basic and acidic residues-rich tracts occupy residues 878–890 (FGERFVEGERYRE), 933–942 (SNREQARGEA), and 955–973 (QRDRDQSVGKQPLMEKRGE). Positions 1008-1023 (DSSQRTSAATPTTQPW) are enriched in polar residues. Basic and acidic residues predominate over residues 1085–1096 (GAADDDRNWRQK).

The protein belongs to the eIF-3 subunit A family. In terms of assembly, component of the eukaryotic translation initiation factor 3 (eIF-3) complex.

It is found in the cytoplasm. Its function is as follows. RNA-binding component of the eukaryotic translation initiation factor 3 (eIF-3) complex, which is involved in protein synthesis of a specialized repertoire of mRNAs and, together with other initiation factors, stimulates binding of mRNA and methionyl-tRNAi to the 40S ribosome. The eIF-3 complex specifically targets and initiates translation of a subset of mRNAs involved in cell proliferation. This chain is Eukaryotic translation initiation factor 3 subunit A, found in Brugia malayi (Filarial nematode worm).